Reading from the N-terminus, the 251-residue chain is Ditrans,polycis-undecaprenyl-diphosphate synthase ((2E,6E)-farnesyl-diphosphate specific) (251 aa).

The active site involves Asp21. A Mg(2+)-binding site is contributed by Asp21. Substrate contacts are provided by residues 22–25 (GNNR), Trp26, His38, and 66–68 (SSE). Residue Asn69 is the Proton acceptor of the active site. Residues Trp70, Arg72, Arg189, and 195–197 (RIS) each bind substrate. Mg(2+) is bound at residue Glu208.

Belongs to the UPP synthase family. Homodimer. The cofactor is Mg(2+).

It catalyses the reaction 8 isopentenyl diphosphate + (2E,6E)-farnesyl diphosphate = di-trans,octa-cis-undecaprenyl diphosphate + 8 diphosphate. Functionally, catalyzes the sequential condensation of isopentenyl diphosphate (IPP) with (2E,6E)-farnesyl diphosphate (E,E-FPP) to yield (2Z,6Z,10Z,14Z,18Z,22Z,26Z,30Z,34E,38E)-undecaprenyl diphosphate (di-trans,octa-cis-UPP). UPP is the precursor of glycosyl carrier lipid in the biosynthesis of bacterial cell wall polysaccharide components such as peptidoglycan and lipopolysaccharide. This is Ditrans,polycis-undecaprenyl-diphosphate synthase ((2E,6E)-farnesyl-diphosphate specific) from Pseudomonas putida (strain ATCC 47054 / DSM 6125 / CFBP 8728 / NCIMB 11950 / KT2440).